The primary structure comprises 470 residues: Poly(A) polymerase catalytic subunit (470 aa).

Active-site residues include aspartate 192 and aspartate 194.

The protein belongs to the poxviridae poly(A) polymerase catalytic subunit family. In terms of assembly, heterodimer of a large (catalytic) subunit and a small (regulatory) subunit.

It catalyses the reaction RNA(n) + ATP = RNA(n)-3'-adenine ribonucleotide + diphosphate. Polymerase that creates the 3'-poly(A) tail of mRNA's. In Sus scrofa (Pig), this protein is Poly(A) polymerase catalytic subunit (PAPL).